The sequence spans 473 residues: Photosystem II CP43 reaction center protein (473 aa).

Residues 1-14 (MKTLYSLRRFYHVE) constitute a propeptide that is removed on maturation. Position 15 is an N-acetylthreonine (Thr-15). At Thr-15 the chain carries Phosphothreonine. The next 5 membrane-spanning stretches (helical) occupy residues 69-93 (LFEV…PHLA), 134-155 (LLGP…KDRN), 178-200 (KALY…RKIT), 255-275 (KPFA…LSYS), and 291-312 (WFNN…ASQA). Residue Glu-367 participates in [CaMn4O5] cluster binding. Residues 447–471 (RARAAAAGFEKGIDRDFEPVLSMTP) form a helical membrane-spanning segment.

Belongs to the PsbB/PsbC family. PsbC subfamily. As to quaternary structure, PSII is composed of 1 copy each of membrane proteins PsbA, PsbB, PsbC, PsbD, PsbE, PsbF, PsbH, PsbI, PsbJ, PsbK, PsbL, PsbM, PsbT, PsbX, PsbY, PsbZ, Psb30/Ycf12, at least 3 peripheral proteins of the oxygen-evolving complex and a large number of cofactors. It forms dimeric complexes. It depends on Binds multiple chlorophylls and provides some of the ligands for the Ca-4Mn-5O cluster of the oxygen-evolving complex. It may also provide a ligand for a Cl- that is required for oxygen evolution. PSII binds additional chlorophylls, carotenoids and specific lipids. as a cofactor.

The protein localises to the plastid. The protein resides in the chloroplast thylakoid membrane. Its function is as follows. One of the components of the core complex of photosystem II (PSII). It binds chlorophyll and helps catalyze the primary light-induced photochemical processes of PSII. PSII is a light-driven water:plastoquinone oxidoreductase, using light energy to abstract electrons from H(2)O, generating O(2) and a proton gradient subsequently used for ATP formation. This chain is Photosystem II CP43 reaction center protein, found in Chloranthus spicatus (Chulantree).